The following is a 412-amino-acid chain: Serine hydroxymethyltransferase (412 aa).

Residues L117 and G121 to L123 contribute to the (6S)-5,6,7,8-tetrahydrofolate site. An N6-(pyridoxal phosphate)lysine modification is found at K226.

The protein belongs to the SHMT family. As to quaternary structure, homodimer. Pyridoxal 5'-phosphate serves as cofactor.

It is found in the cytoplasm. The enzyme catalyses (6R)-5,10-methylene-5,6,7,8-tetrahydrofolate + glycine + H2O = (6S)-5,6,7,8-tetrahydrofolate + L-serine. It functions in the pathway one-carbon metabolism; tetrahydrofolate interconversion. Its pathway is amino-acid biosynthesis; glycine biosynthesis; glycine from L-serine: step 1/1. Functionally, catalyzes the reversible interconversion of serine and glycine with tetrahydrofolate (THF) serving as the one-carbon carrier. This reaction serves as the major source of one-carbon groups required for the biosynthesis of purines, thymidylate, methionine, and other important biomolecules. Also exhibits THF-independent aldolase activity toward beta-hydroxyamino acids, producing glycine and aldehydes, via a retro-aldol mechanism. The sequence is that of Serine hydroxymethyltransferase from Staphylococcus aureus (strain MW2).